The primary structure comprises 331 residues: Ketol-acid reductoisomerase (NADP(+)) (331 aa).

The 181-residue stretch at 2–182 (ARLYYDADAN…GGTRAGILET (181 aa)) folds into the KARI N-terminal Rossmann domain. Residues 25-28 (YGSQ), Ser-51, Ser-53, and 83-86 (DEVQ) each bind NADP(+). His-108 is an active-site residue. Gly-134 is a binding site for NADP(+). Residues 183 to 328 (TFREETETDL…KDLRAMFSWT (146 aa)) enclose the KARI C-terminal knotted domain. Mg(2+)-binding residues include Asp-191, Glu-195, Glu-227, and Glu-231. Substrate is bound at residue Ser-252.

Belongs to the ketol-acid reductoisomerase family. It depends on Mg(2+) as a cofactor.

The enzyme catalyses (2R)-2,3-dihydroxy-3-methylbutanoate + NADP(+) = (2S)-2-acetolactate + NADPH + H(+). It catalyses the reaction (2R,3R)-2,3-dihydroxy-3-methylpentanoate + NADP(+) = (S)-2-ethyl-2-hydroxy-3-oxobutanoate + NADPH + H(+). It participates in amino-acid biosynthesis; L-isoleucine biosynthesis; L-isoleucine from 2-oxobutanoate: step 2/4. It functions in the pathway amino-acid biosynthesis; L-valine biosynthesis; L-valine from pyruvate: step 2/4. Involved in the biosynthesis of branched-chain amino acids (BCAA). Catalyzes an alkyl-migration followed by a ketol-acid reduction of (S)-2-acetolactate (S2AL) to yield (R)-2,3-dihydroxy-isovalerate. In the isomerase reaction, S2AL is rearranged via a Mg-dependent methyl migration to produce 3-hydroxy-3-methyl-2-ketobutyrate (HMKB). In the reductase reaction, this 2-ketoacid undergoes a metal-dependent reduction by NADPH to yield (R)-2,3-dihydroxy-isovalerate. This Acaryochloris marina (strain MBIC 11017) protein is Ketol-acid reductoisomerase (NADP(+)).